Reading from the N-terminus, the 215-residue chain is Cytochrome b6 (215 aa).

The chain crosses the membrane as a helical span at residues 32–52; the sequence is IFYCLGGITFTCFLLQVASGF. C35 provides a ligand contact to heme c. The heme b site is built by H86 and H100. The next 3 membrane-spanning stretches (helical) occupy residues 90-110, 116-136, and 186-206; these read ASMM…TGGF, LTWV…VTGY, and LHTF…FLMI. Heme b contacts are provided by H187 and H202.

Belongs to the cytochrome b family. PetB subfamily. In terms of assembly, the 4 large subunits of the cytochrome b6-f complex are cytochrome b6, subunit IV (17 kDa polypeptide, PetD), cytochrome f and the Rieske protein, while the 4 small subunits are PetG, PetL, PetM and PetN. The complex functions as a dimer. Requires heme b as cofactor. Heme c serves as cofactor.

The protein localises to the plastid. Its subcellular location is the chloroplast thylakoid membrane. Functionally, component of the cytochrome b6-f complex, which mediates electron transfer between photosystem II (PSII) and photosystem I (PSI), cyclic electron flow around PSI, and state transitions. The chain is Cytochrome b6 from Coleochaete orbicularis (Charophycean green alga).